The primary structure comprises 145 residues: D-aminoacyl-tRNA deacylase (145 aa).

A Gly-cisPro motif, important for rejection of L-amino acids motif is present at residues 137-138; sequence GP.

It belongs to the DTD family. In terms of assembly, homodimer.

It is found in the cytoplasm. It catalyses the reaction glycyl-tRNA(Ala) + H2O = tRNA(Ala) + glycine + H(+). It carries out the reaction a D-aminoacyl-tRNA + H2O = a tRNA + a D-alpha-amino acid + H(+). Functionally, an aminoacyl-tRNA editing enzyme that deacylates mischarged D-aminoacyl-tRNAs. Also deacylates mischarged glycyl-tRNA(Ala), protecting cells against glycine mischarging by AlaRS. Acts via tRNA-based rather than protein-based catalysis; rejects L-amino acids rather than detecting D-amino acids in the active site. By recycling D-aminoacyl-tRNA to D-amino acids and free tRNA molecules, this enzyme counteracts the toxicity associated with the formation of D-aminoacyl-tRNA entities in vivo and helps enforce protein L-homochirality. This chain is D-aminoacyl-tRNA deacylase, found in Alteromonas mediterranea (strain DSM 17117 / CIP 110805 / LMG 28347 / Deep ecotype).